The chain runs to 191 residues: Large ribosomal subunit protein eL15 (191 aa).

It belongs to the eukaryotic ribosomal protein eL15 family.

The chain is Large ribosomal subunit protein eL15 (rpl15e) from Pyrobaculum aerophilum (strain ATCC 51768 / DSM 7523 / JCM 9630 / CIP 104966 / NBRC 100827 / IM2).